The sequence spans 340 residues: GTP 3',8-cyclase (340 aa).

Residues 8–230 (KLGRPIRDLR…EQHFEIDPVE (223 aa)) enclose the Radical SAM core domain. Arginine 17 is a GTP binding site. Positions 24 and 28 each coordinate [4Fe-4S] cluster. Residue tyrosine 30 participates in S-adenosyl-L-methionine binding. Cysteine 31 provides a ligand contact to [4Fe-4S] cluster. A GTP-binding site is contributed by arginine 71. Glycine 75 lines the S-adenosyl-L-methionine pocket. Threonine 102 contributes to the GTP binding site. Residue serine 126 coordinates S-adenosyl-L-methionine. Lysine 163 contributes to the GTP binding site. Methionine 197 contacts S-adenosyl-L-methionine. Residues cysteine 261 and cysteine 264 each contribute to the [4Fe-4S] cluster site. 266-268 (RAR) serves as a coordination point for GTP. Cysteine 278 lines the [4Fe-4S] cluster pocket.

The protein belongs to the radical SAM superfamily. MoaA family. In terms of assembly, monomer and homodimer. The cofactor is [4Fe-4S] cluster.

It catalyses the reaction GTP + AH2 + S-adenosyl-L-methionine = (8S)-3',8-cyclo-7,8-dihydroguanosine 5'-triphosphate + 5'-deoxyadenosine + L-methionine + A + H(+). Its pathway is cofactor biosynthesis; molybdopterin biosynthesis. Functionally, catalyzes the cyclization of GTP to (8S)-3',8-cyclo-7,8-dihydroguanosine 5'-triphosphate. This Staphylococcus aureus (strain bovine RF122 / ET3-1) protein is GTP 3',8-cyclase.